Consider the following 667-residue polypeptide: Kelch repeat-containing protein DDB_G0274267 (667 aa).

A coiled-coil region spans residues 58–98 (TDRKIELLQQLGEELEAHKQQIESNRDKSMMLIEQLNKKMN). The tract at residues 248–281 (SNNNDDTDDYDNNNNNNNDNKDDFDNCENNNNGD) is disordered. 6 Kelch repeats span residues 319–366 (CIYS…NFDG), 369–412 (HIYL…NGAN), 434–480 (NIYL…IYKE), 484–531 (SIYL…YDDQ), 534–582 (YIYV…SGGG), and 607–654 (IVHI…QFKN).

The chain is Kelch repeat-containing protein DDB_G0274267 from Dictyostelium discoideum (Social amoeba).